Consider the following 194-residue polypeptide: MEVILLERVAKLGQMGELVRVKDGFARNFLLPRGKALRATAANRDKYEHMKADLEARNIEAKAEAAKVAEKIDGKNVIVIRQASETGQLFGSVSVRDIVTSFEADGVKITRSQILLDAPIKTIGRHTIEVAVHPEVEVGVSVTVARSVEEAERINRGEDISSRREDQDAAAEAIAAAGEFFDPDAQQDEEPEQQ.

The segment covering 156–167 has biased composition (basic and acidic residues); the sequence is RGEDISSRREDQ. A disordered region spans residues 156–194; sequence RGEDISSRREDQDAAAEAIAAAGEFFDPDAQQDEEPEQQ. Positions 181 to 194 are enriched in acidic residues; sequence FDPDAQQDEEPEQQ.

Belongs to the bacterial ribosomal protein bL9 family.

Binds to the 23S rRNA. This is Large ribosomal subunit protein bL9 from Rhodopseudomonas palustris (strain BisB5).